The following is a 1463-amino-acid chain: Nucleoporin NUP152 (1463 aa).

Disordered stretches follow at residues 1–199 (MDPP…GRPG), 339–568 (GIPD…ELPA), and 609–1064 (TTKK…FGNT). 6 stretches are compositionally biased toward polar residues: residues 32-42 (STNSNSVTANA), 81-92 (GPSSKLSQSVSA), 144-155 (TSSKATSFSGAP), 175-191 (TTYTQRVSSHPLTQSFP), 367-378 (PSSSTFTHTASP), and 416-472 (PAKT…SSNI). Residues 481–498 (KDEDNESDTGSEAEAEDE) show a composition bias toward acidic residues. 2 stretches are compositionally biased toward low complexity: residues 511–523 (GASSSAPSEGGES) and 616–630 (AAAPAEAPKEATPTT). Polar residues-rich tracts occupy residues 651-664 (IFGSTTNPTETSIP), 673-689 (PATSTTNSLFGATTSAA), and 720-746 (TTESPKTNLFQFGTPNKTETAPATQPQ). The stretch at 729–732 (FQFG) is one FXFG 1 repeat. Low complexity predominate over residues 753–768 (KPPSTETPTEKPATTS). The span at 777–789 (PATTSSLFGSATT) shows a compositional bias: polar residues. Low complexity predominate over residues 803–813 (TTTPADKPTTT). Residues 814-828 (NLFGSTSTQATSGSD) are compositionally biased toward polar residues. An FXFG 2 repeat occupies 835–838 (FAFG). Residues 840 to 863 (TTESKPTTSLFGSTTPAPATSTEN) are compositionally biased toward polar residues. Positions 870–881 (ATTTSATPATNT) are enriched in low complexity. Polar residues-rich tracts occupy residues 900 to 923 (GSSTTTAAPVFQFGSTPASTSTEQ), 940 to 961 (GSTSATSTEQKPLFGSSTTMTE), 968 to 987 (SISTTATEQKPLFGSTSTTE), 998 to 1029 (STEQKSLFGITPSTTENNPASIFGNSSTSTEQ), and 1037 to 1055 (PASTEQKPLFGSTPSTTEN). One copy of the FXFG 3 repeat lies at 910–913 (FQFG). FXFG repeat units lie at residues 1074–1077 (FNFG), 1127–1130 (FNFG), 1141–1144 (FTFG), and 1152–1155 (FTFG). Disordered stretches follow at residues 1155 to 1174 (GASSDSSNASNNASSAPIFS) and 1179 to 1217 (QPSSTPLFGQNNPPAASNIFASSLAPVGGTSTGTSKHVP). Positions 1156–1170 (ASSDSSNASNNASSA) are enriched in low complexity. One copy of the FXFG 8 repeat lies at 1173 to 1176 (FSFG). Polar residues predominate over residues 1179–1199 (QPSSTPLFGQNNPPAASNIFA). The stretch at 1236–1239 (FTFG) is one FXFG 9 repeat. Residues 1240–1271 (GASSLATTPAASTPEPSAANAAAAGEDQGASA) show a composition bias toward low complexity. 2 disordered regions span residues 1240 to 1335 (GASS…PWKV) and 1416 to 1463 (AALE…DEKK). The RanBD1 domain occupies 1289 to 1427 (GEEDESVVHE…LEEHKKANEK (139 aa)). Residues 1418-1463 (LEEHKKANEKKDGEKNEESEKKDEKQEEKKNEEKKDEKEEKKDEKK) show a composition bias toward basic and acidic residues.

In terms of assembly, the nuclear pore complex (NPC) constitutes the exclusive means of nucleocytoplasmic transport. NPCs allow the passive diffusion of ions and small molecules and the active, nuclear transport receptor-mediated bidirectional transport of macromolecules such as proteins, RNAs, ribonucleoparticles (RNPs), and ribosomal subunits across the nuclear envelope. The 55-60 MDa NPC is composed of at least 28 different subunits: AMO1, ELYS, GLE1, GLE2, MLP1, NDC1, NIC96, NSP1, NUP133, NUP145, NUP152, NUP159, NUP170, NUP188, NUP192, NUP37, NUP49, NUP53, NUP56, NUP57, NUP82, NUP84, NUP85, POM152, POM33, POM34, SEC13 and SEH1. Due to its 8-fold rotational symmetry, all subunits are present with 8 copies or multiples thereof.

The protein resides in the nucleus. The protein localises to the nuclear pore complex. Its subcellular location is the nucleus membrane. In terms of biological role, functions as a component of the nuclear pore complex (NPC). NPC components, collectively referred to as nucleoporins (NUPs), can play the role of both NPC structural components and of docking or interaction partners for transiently associated nuclear transport factors. Active directional transport is assured by both, a Phe-Gly (FG) repeat affinity gradient for these transport factors across the NPC and a transport cofactor concentration gradient across the nuclear envelope (GSP1 and GSP2 GTPases associated predominantly with GTP in the nucleus, with GDP in the cytoplasm). The polypeptide is Nucleoporin NUP152 (NUP152) (Chaetomium thermophilum (strain DSM 1495 / CBS 144.50 / IMI 039719) (Thermochaetoides thermophila)).